Consider the following 407-residue polypeptide: Myeloid cell nuclear differentiation antigen (407 aa).

Residues Met1–Lys88 form the Pyrin domain. Residues Leu122–Pro211 form a disordered region. Residues Pro131–Lys137 carry the Nuclear localization signal motif. Residues His177–Gln199 show a composition bias toward low complexity. The region spanning Ala196–Ile394 is the HIN-200 domain.

As to quaternary structure, participates in a ternary complex with YY1 and the YY1 target DNA element. Binds nucleolin and nucleophosmin/NPM/B23.

It localises to the nucleus. The protein localises to the cytoplasm. May act as a transcriptional activator/repressor in the myeloid lineage. Plays a role in the granulocyte/monocyte cell-specific response to interferon. Stimulates the DNA binding of the transcriptional repressor protein YY1. The polypeptide is Myeloid cell nuclear differentiation antigen (MNDA) (Macaca fascicularis (Crab-eating macaque)).